We begin with the raw amino-acid sequence, 394 residues long: Probable sugar efflux transporter (394 aa).

Transmembrane regions (helical) follow at residues 15–35 (VLML…PVGL), 50–70 (VGLM…PMML), 79–99 (MLLM…SVAW), 109–129 (IGIA…AIRV), 137–157 (QALS…LPIG), 168–188 (ITFA…LKLL), 209–229 (PALV…YTAY), 249–269 (FLLL…SIYG), 272–292 (FPAT…MCLY), 299–319 (LAVS…GLAV), 333–353 (VAMS…ALLG), and 362–382 (MASV…WCAW).

This sequence belongs to the major facilitator superfamily. SotB (TC 2.A.1.2) family.

The protein localises to the cell inner membrane. Involved in the efflux of sugars. The physiological role may be the reduction of the intracellular concentration of toxic sugars or sugar metabolites. The polypeptide is Probable sugar efflux transporter (Erwinia tasmaniensis (strain DSM 17950 / CFBP 7177 / CIP 109463 / NCPPB 4357 / Et1/99)).